The sequence spans 378 residues: Protein RecA (378 aa).

Position 79–86 (79–86) interacts with ATP; it reads GPESSGKT.

Belongs to the RecA family.

It localises to the cytoplasm. Can catalyze the hydrolysis of ATP in the presence of single-stranded DNA, the ATP-dependent uptake of single-stranded DNA by duplex DNA, and the ATP-dependent hybridization of homologous single-stranded DNAs. It interacts with LexA causing its activation and leading to its autocatalytic cleavage. The sequence is that of Protein RecA from Streptococcus pyogenes serotype M1.